We begin with the raw amino-acid sequence, 239 residues long: DNA repair protein RecO (239 aa).

Belongs to the RecO family.

Involved in DNA repair and RecF pathway recombination. The protein is DNA repair protein RecO of Christiangramia forsetii (strain DSM 17595 / CGMCC 1.15422 / KT0803) (Gramella forsetii).